Consider the following 577-residue polypeptide: Arginine--tRNA ligase (577 aa).

A 'HIGH' region motif is present at residues 122 to 132 (PNVAKEMHVGH).

It belongs to the class-I aminoacyl-tRNA synthetase family. In terms of assembly, monomer.

It localises to the cytoplasm. The enzyme catalyses tRNA(Arg) + L-arginine + ATP = L-arginyl-tRNA(Arg) + AMP + diphosphate. The protein is Arginine--tRNA ligase of Haemophilus influenzae (strain PittEE).